An 84-amino-acid polypeptide reads, in one-letter code: U8-theraphotoxin-Hhn1f (84 aa).

A signal peptide spans Met-1–Cys-21. Cystine bridges form between Cys-23/Cys-35, Cys-29/Cys-44, Cys-34/Cys-67, Cys-54/Cys-75, and Cys-69/Cys-81.

This sequence belongs to the AVIT (prokineticin) family. In terms of tissue distribution, expressed by the venom gland.

The protein resides in the secreted. In Cyriopagopus hainanus (Chinese bird spider), this protein is U8-theraphotoxin-Hhn1f.